Reading from the N-terminus, the 486-residue chain is ATP synthase subunit beta (486 aa).

164-171 (GGAGVGKT) is an ATP binding site.

The protein belongs to the ATPase alpha/beta chains family. In terms of assembly, F-type ATPases have 2 components, CF(1) - the catalytic core - and CF(0) - the membrane proton channel. CF(1) has five subunits: alpha(3), beta(3), gamma(1), delta(1), epsilon(1). CF(0) has four main subunits: a(1), b(1), b'(1) and c(9-12).

Its subcellular location is the cellular thylakoid membrane. The enzyme catalyses ATP + H2O + 4 H(+)(in) = ADP + phosphate + 5 H(+)(out). Functionally, produces ATP from ADP in the presence of a proton gradient across the membrane. The catalytic sites are hosted primarily by the beta subunits. In Prochlorococcus marinus (strain MIT 9215), this protein is ATP synthase subunit beta.